The primary structure comprises 234 residues: Sugar fermentation stimulation protein homolog (234 aa).

Belongs to the SfsA family.

The polypeptide is Sugar fermentation stimulation protein homolog (Idiomarina loihiensis (strain ATCC BAA-735 / DSM 15497 / L2-TR)).